We begin with the raw amino-acid sequence, 312 residues long: Acetyl-coenzyme A carboxylase carboxyl transferase subunit alpha (312 aa).

Positions 36 to 286 (RLDKEVKSIY…KEYFLDALRT (251 aa)) constitute a CoA carboxyltransferase C-terminal domain.

Belongs to the AccA family. Acetyl-CoA carboxylase is a heterohexamer composed of biotin carboxyl carrier protein (AccB), biotin carboxylase (AccC) and two subunits each of ACCase subunit alpha (AccA) and ACCase subunit beta (AccD).

Its subcellular location is the cytoplasm. The catalysed reaction is N(6)-carboxybiotinyl-L-lysyl-[protein] + acetyl-CoA = N(6)-biotinyl-L-lysyl-[protein] + malonyl-CoA. The protein operates within lipid metabolism; malonyl-CoA biosynthesis; malonyl-CoA from acetyl-CoA: step 1/1. Functionally, component of the acetyl coenzyme A carboxylase (ACC) complex. First, biotin carboxylase catalyzes the carboxylation of biotin on its carrier protein (BCCP) and then the CO(2) group is transferred by the carboxyltransferase to acetyl-CoA to form malonyl-CoA. The chain is Acetyl-coenzyme A carboxylase carboxyl transferase subunit alpha from Helicobacter pylori (strain ATCC 700392 / 26695) (Campylobacter pylori).